The primary structure comprises 315 residues: DNA-directed RNA polymerase subunit alpha (315 aa).

The segment at 1-228 (MLEIEKPKIE…EHFKLFMTLT (228 aa)) is alpha N-terminal domain (alpha-NTD). The alpha C-terminal domain (alpha-CTD) stretch occupies residues 245–315 (KEKVLEMAIE…LGLSLKQNED (71 aa)).

Belongs to the RNA polymerase alpha chain family. As to quaternary structure, homodimer. The RNAP catalytic core consists of 2 alpha, 1 beta, 1 beta' and 1 omega subunit. When a sigma factor is associated with the core the holoenzyme is formed, which can initiate transcription.

The catalysed reaction is RNA(n) + a ribonucleoside 5'-triphosphate = RNA(n+1) + diphosphate. Functionally, DNA-dependent RNA polymerase catalyzes the transcription of DNA into RNA using the four ribonucleoside triphosphates as substrates. This Clostridium kluyveri (strain NBRC 12016) protein is DNA-directed RNA polymerase subunit alpha.